A 77-amino-acid chain; its full sequence is Cell division topological specificity factor (77 aa).

Belongs to the MinE family.

Prevents the cell division inhibition by proteins MinC and MinD at internal division sites while permitting inhibition at polar sites. This ensures cell division at the proper site by restricting the formation of a division septum at the midpoint of the long axis of the cell. The polypeptide is Cell division topological specificity factor (Helicobacter acinonychis (strain Sheeba)).